A 314-amino-acid chain; its full sequence is Homeobox-leucine zipper protein HAT7 (314 aa).

The interval 77–109 (HHHLTQKSPTTTNNMNDQDQVGEEDNLSDDGSH) is disordered. Positions 82–95 (QKSPTTTNNMNDQD) are enriched in polar residues. A DNA-binding region (homeobox) is located at residues 112 to 171 (LGEKKKRLNLEQVRALEKSFELGNKLEPERKMQLAKALGLQPRQIAIWFQNRRARWKTKQ). Residues 172-207 (LERDYDSLKKQFDVLKSDNDSLLAHNKKLHAELVAL) form a leucine-zipper region.

Belongs to the HD-ZIP homeobox family. Class I subfamily. In terms of tissue distribution, expressed predominantly in flowers, and in the cortex of the root and the stem.

It localises to the nucleus. Its function is as follows. Probable transcription factor. The polypeptide is Homeobox-leucine zipper protein HAT7 (HAT7) (Arabidopsis thaliana (Mouse-ear cress)).